A 332-amino-acid chain; its full sequence is Tetraacyldisaccharide 4'-kinase (332 aa).

58–65 (TVGGSGKT) serves as a coordination point for ATP.

It belongs to the LpxK family.

It carries out the reaction a lipid A disaccharide + ATP = a lipid IVA + ADP + H(+). It functions in the pathway glycolipid biosynthesis; lipid IV(A) biosynthesis; lipid IV(A) from (3R)-3-hydroxytetradecanoyl-[acyl-carrier-protein] and UDP-N-acetyl-alpha-D-glucosamine: step 6/6. Its function is as follows. Transfers the gamma-phosphate of ATP to the 4'-position of a tetraacyldisaccharide 1-phosphate intermediate (termed DS-1-P) to form tetraacyldisaccharide 1,4'-bis-phosphate (lipid IVA). The protein is Tetraacyldisaccharide 4'-kinase of Shewanella piezotolerans (strain WP3 / JCM 13877).